The primary structure comprises 294 residues: MKNIDLTNWKLLAEIYEYLFFFSFFFLCLLVIIVVKFNNSTVGREYTFSTFSGMLVYILLLPVKMGMLTKMWDVSTDYCIILMFLSDFSFIFSSWALTLLALERINNFSFSEIKVNETKILKQMSFPIIWVTSIFQAVQISMKYKKSQMNLEDDYCLLAIERSAEEAWILLMYTVVIPTFIVFFYVLNKRFLFLERDLNSIVTHLSLFLFFGALCFFPASVLNEFNCNRLFYGLHELLIVCLELKIFYVPTMTYIISCENYRLAAKAFFCKCFKPCFLMPSLRKLQQPTKSTQF.

Over 1–14 (MKNIDLTNWKLLAE) the chain is Extracellular. Residues 15 to 35 (IYEYLFFFSFFFLCLLVIIVV) traverse the membrane as a helical segment. The Cytoplasmic portion of the chain corresponds to 36 to 47 (KFNNSTVGREYT). The chain crosses the membrane as a helical span at residues 48-68 (FSTFSGMLVYILLLPVKMGML). The Extracellular portion of the chain corresponds to 69 to 79 (TKMWDVSTDYC). Residues 80 to 102 (IILMFLSDFSFIFSSWALTLLAL) form a helical membrane-spanning segment. Residues 103-119 (ERINNFSFSEIKVNETK) lie on the Cytoplasmic side of the membrane. A helical membrane pass occupies residues 120–140 (ILKQMSFPIIWVTSIFQAVQI). At 141–166 (SMKYKKSQMNLEDDYCLLAIERSAEE) the chain is on the extracellular side. Residues 167–187 (AWILLMYTVVIPTFIVFFYVL) traverse the membrane as a helical segment. Residues 188 to 200 (NKRFLFLERDLNS) are Cytoplasmic-facing. Residues 201 to 221 (IVTHLSLFLFFGALCFFPASV) form a helical membrane-spanning segment. At 222 to 236 (LNEFNCNRLFYGLHE) the chain is on the extracellular side. A helical membrane pass occupies residues 237–257 (LLIVCLELKIFYVPTMTYIIS). Residues 258–294 (CENYRLAAKAFFCKCFKPCFLMPSLRKLQQPTKSTQF) are Cytoplasmic-facing.

This sequence belongs to the G-protein coupled receptor 1 family.

It localises to the host cell membrane. This is G-protein coupled receptor homolog U51 (U51) from Human herpesvirus 7 (strain JI) (HHV-7).